The chain runs to 631 residues: Probable potassium transport system protein Kup 1 (631 aa).

The next 12 helical transmembrane spans lie at 17–37 (LALGALGVVFGDIGTSPLYAL), 55–75 (LSLIFWSLIIVVSFKYLMIIF), 101–121 (PLFYIVAIFGAGLLLGDGMLT), 140–160 (LYPYVLPIASVILVLLFSLQA), 166–186 (IGYLFGPLILIWFITIAILGI), 217–237 (FLLGGIFLVVTGGEALFADIG), 249–269 (FFIALPCLLLNYFGQGANLIV), 277–297 (PFFMIAPPWFYLPLIIIATVA), 338–358 (IYVPQINFILFIGTMAFCLAF), 370–390 (IAVNLEMLLVDAMVAYAAVSI), 395–415 (TFNVIFLFGLFLLIDLAFLGA), and 420–440 (FITGGWVPIVLAFVIAFIMYS).

The protein belongs to the HAK/KUP transporter (TC 2.A.72) family.

Its subcellular location is the cell inner membrane. It carries out the reaction K(+)(in) + H(+)(in) = K(+)(out) + H(+)(out). Its function is as follows. Transport of potassium into the cell. Likely operates as a K(+):H(+) symporter. This is Probable potassium transport system protein Kup 1 from Legionella pneumophila (strain Corby).